The primary structure comprises 151 residues: Probable cGMP 3',5'-cyclic phosphodiesterase subunit delta (151 aa).

Belongs to the PDE6D/unc-119 family. Interacts with Pde6.

It is found in the nucleus. Its subcellular location is the cytoplasm. This Drosophila willistoni (Fruit fly) protein is Probable cGMP 3',5'-cyclic phosphodiesterase subunit delta.